We begin with the raw amino-acid sequence, 322 residues long: Protein IRREGULAR XYLEM 15 (322 aa).

The chain crosses the membrane as a helical span at residues 28–48; that stretch reads LWLLAFVSFFTIVFLLTLLYT.

In terms of tissue distribution, expressed in rosette leaves, stems and siliques. Expressed in the xylem.

It localises to the golgi apparatus membrane. In terms of biological role, required for xylan biosynthesis, but not directly involved in catalyzing the addition of sugars to the growing polymer. The chain is Protein IRREGULAR XYLEM 15 (IRX15) from Arabidopsis thaliana (Mouse-ear cress).